The following is a 290-amino-acid chain: MPNLKDLKNRIESVKSTRKITKAMQMVAAAKLRRAQDAAEASRPYTERFNAVLAGLAASVGDSDSGPRLLVGTGSDQTHLLVVMTAERGLCGGFNSSIAKLARAHAEKLVAQGKTVKILTVGKKGREQLKRDLSKHFIGHVDLSEVKRVSYDNAADIAADVLGRFDAGEFDVATIFFNRFQSVISQIPTAQQIIPASFEGDADADATLYDYEPSEEAILADLLPRGVATQIFAALLENGASEQGARMSAMDNATRNAGDMIERLTIEYNRSRQAVITNELIEIISGAEAL.

This sequence belongs to the ATPase gamma chain family. As to quaternary structure, F-type ATPases have 2 components, CF(1) - the catalytic core - and CF(0) - the membrane proton channel. CF(1) has five subunits: alpha(3), beta(3), gamma(1), delta(1), epsilon(1). CF(0) has three main subunits: a, b and c.

It localises to the cell inner membrane. Its function is as follows. Produces ATP from ADP in the presence of a proton gradient across the membrane. The gamma chain is believed to be important in regulating ATPase activity and the flow of protons through the CF(0) complex. This chain is ATP synthase gamma chain, found in Dinoroseobacter shibae (strain DSM 16493 / NCIMB 14021 / DFL 12).